The following is a 213-amino-acid chain: Major fimbrial subunit (213 aa).

The signal sequence occupies residues 1-20 (MKKTLLGSLILLAFAGNVQA). Cys-41 and Cys-81 are disulfide-bonded.

This sequence belongs to the fimbrial protein family.

Its subcellular location is the fimbrium. Its function is as follows. Mediates adherence to oropharyngeal epithelial cells. Helps the airway colonization process. The sequence is that of Major fimbrial subunit (hifA) from Haemophilus influenzae.